We begin with the raw amino-acid sequence, 602 residues long: MFSLLSRALCAASSSPAAPRGRSLLAALLSPSASPLDPCRGPAAPEPPRRRAFHGSPSPLGFRSTPASWSSPEAGAAVGGDDGLEVARLGISPWIVERLAARGITRLFPIQRAVLDPAMQGKDMIGRARTGTGKTLAFGIPIMDRILRHNEKNGSGRNPLAIILAPTRELARQVEKEFKESAPLDSLCVYGGVPISHQMRALNYGVDVVVGTPGRIIDLLRRGVLNLSEIQFVVLDEADQMLAVGFDEDVEVIMENLPQNRQSMLFSATMPSWIRKITSKYLKDPIIIDLVGDEDQKLPEGISLYSIASEHYGKPSILGPLIKEHANGGKCIVFTQTKREADRLAYAMGRSYACQALHGDISQNQRERTLSGFRDGRFNILVATDVAARGLDIPNVDLVIHYELPNTSELFVHRSGRTARAGKKGSAILIYTNDQARAVRIIEQDIGCKFTELPKIEVADEASDMFNVVRDNRSRLAGSPRTGGSSFGRGGYGGFGEGRSRGFGDFDGFGSSPNRGGRSRDAGSRYGSGFGDFRRPSNAFGRSSSKQPDGFGFGDFGEGNFSRNGNRRSRSFDDSGSTRYSRRPNGFGTSDFGRSGGFDDSN.

Over residues 33 to 43 the composition is skewed to low complexity; it reads ASPLDPCRGPA. Residues 33–76 form a disordered region; the sequence is ASPLDPCRGPAAPEPPRRRAFHGSPSPLGFRSTPASWSSPEAGA. Positions 84–112 match the Q motif motif; sequence LEVARLGISPWIVERLAARGITRLFPIQR. In terms of domain architecture, Helicase ATP-binding spans 115 to 288; the sequence is LDPAMQGKDM…SKYLKDPIII (174 aa). Residue 128-135 coordinates ATP; the sequence is ARTGTGKT. The DEAD box motif lies at 236-239; sequence DEAD. The Helicase C-terminal domain occupies 317–462; it reads ILGPLIKEHA…LPKIEVADEA (146 aa). Residues 503-602 form a disordered region; it reads FGDFDGFGSS…GRSGGFDDSN (100 aa).

The protein belongs to the DEAD box helicase family. DDX21/DDX50 subfamily.

The enzyme catalyses ATP + H2O = ADP + phosphate + H(+). This Oryza sativa subsp. japonica (Rice) protein is DEAD-box ATP-dependent RNA helicase 53.